A 400-amino-acid polypeptide reads, in one-letter code: Exodeoxyribonuclease 7 large subunit (400 aa).

It belongs to the XseA family. Heterooligomer composed of large and small subunits.

It localises to the cytoplasm. It carries out the reaction Exonucleolytic cleavage in either 5'- to 3'- or 3'- to 5'-direction to yield nucleoside 5'-phosphates.. Functionally, bidirectionally degrades single-stranded DNA into large acid-insoluble oligonucleotides, which are then degraded further into small acid-soluble oligonucleotides. The protein is Exodeoxyribonuclease 7 large subunit of Clostridium perfringens (strain 13 / Type A).